A 146-amino-acid chain; its full sequence is Acidic phospholipase A2 S14-72F (146 aa).

Positions Met-1 to Ala-19 are cleaved as a signal peptide. A propeptide spanning residues Ala-20–Leu-27 is cleaved from the precursor. Disulfide bonds link Cys-38-Cys-98, Cys-54-Cys-145, Cys-56-Cys-72, Cys-71-Cys-126, Cys-78-Cys-119, Cys-87-Cys-112, and Cys-105-Cys-117. Ca(2+)-binding residues include Tyr-55, Gly-57, and Gly-59. The active site involves His-75. Position 76 (Asp-76) interacts with Ca(2+). The active site involves Asp-120.

The protein belongs to the phospholipase A2 family. Group I subfamily. D49 sub-subfamily. Ca(2+) serves as cofactor. Expressed by the venom gland.

The protein localises to the secreted. It carries out the reaction a 1,2-diacyl-sn-glycero-3-phosphocholine + H2O = a 1-acyl-sn-glycero-3-phosphocholine + a fatty acid + H(+). In terms of biological role, snake venom phospholipase A2 (PLA2) that inhibits collagen-induced platelet aggregation. PLA2 catalyzes the calcium-dependent hydrolysis of the 2-acyl groups in 3-sn-phosphoglycerides. This is Acidic phospholipase A2 S14-72F from Austrelaps superbus (Lowland copperhead snake).